The following is a 599-amino-acid chain: Bile salt-activated lipase (599 aa).

Positions 1–20 (MGRLEVLFLGLTCCLAAACA) are cleaved as a signal peptide. Cys84 and Cys100 are disulfide-bonded. N-linked (GlcNAc...) asparagine glycosylation is present at Asn207. Ser214 functions as the Acyl-ester intermediate in the catalytic mechanism. A disulfide bridge links Cys266 with Cys277. N-linked (GlcNAc...) asparagine glycosylation occurs at Asn325. Active-site charge relay system residues include Asp340 and His455. The segment at 553-599 (TGDQDTLTPPEDDSEVAPDPPSDDSQVVPVPPTDDSVEAQMPATIGF) is disordered. Tandem repeats lie at residues 559-569 (LTPPEDDSEVA), 570-580 (PDPPSDDSQVV), and 581-588 (PVPPTDDS). Residues 559 to 588 (LTPPEDDSEVAPDPPSDDSQVVPVPPTDDS) form a 4 X 11 AA tandem repeats, O-glycosylated region region.

The protein belongs to the type-B carboxylesterase/lipase family. As to quaternary structure, interacts with CLC. In terms of tissue distribution, EXpressed by eosinophils.

The protein resides in the secreted. It carries out the reaction a triacylglycerol + H2O = a diacylglycerol + a fatty acid + H(+). The enzyme catalyses 1,2,3-tri-(9Z-octadecenoyl)-glycerol + H2O = di-(9Z)-octadecenoylglycerol + (9Z)-octadecenoate + H(+). The catalysed reaction is 1,2,3-trioctanoylglycerol + H2O = dioctanoylglycerol + octanoate + H(+). It catalyses the reaction a sterol ester + H2O = a sterol + a fatty acid + H(+). It carries out the reaction an acetyl ester + H2O = an aliphatic alcohol + acetate + H(+). The enzyme catalyses a butanoate ester + H2O = an aliphatic alcohol + butanoate + H(+). The catalysed reaction is 9-hexadecanoyloxy-octadecanoate + H2O = 9-hydroxy-octadecanoate + hexadecanoate + H(+). It catalyses the reaction 9-(9Z-octadecenoyloxy)-octadecanoate + H2O = 9-hydroxy-octadecanoate + (9Z)-octadecenoate + H(+). It carries out the reaction cholesteryl (9Z-octadecenoate) + H2O = cholesterol + (9Z)-octadecenoate + H(+). The enzyme catalyses 1-hexadecanoyl-sn-glycero-3-phosphocholine + H2O = sn-glycerol 3-phosphocholine + hexadecanoate + H(+). The catalysed reaction is 12-hexadecanoyloxy-octadecanoate + H2O = 12-hydroxyoctadecanoate + hexadecanoate + H(+). It catalyses the reaction 12-(9Z-octadecenoyloxy)-octadecanoate + H2O = 12-hydroxyoctadecanoate + (9Z)-octadecenoate + H(+). It carries out the reaction 13-(9Z-octadecenoyloxy)-octadecanoate + H2O = 13-hydroxy-octadecanoate + (9Z)-octadecenoate + H(+). The enzyme catalyses 9-(9Z-hexadecenoyloxy)-octadecanoate + H2O = (9Z)-hexadecenoate + 9-hydroxy-octadecanoate + H(+). The catalysed reaction is 12-(9Z-hexadecenoyloxy)-octadecanoate + H2O = 12-hydroxyoctadecanoate + (9Z)-hexadecenoate + H(+). It catalyses the reaction 13-(9Z-hexadecenoyloxy)-octadecanoate + H2O = 13-hydroxy-octadecanoate + (9Z)-hexadecenoate + H(+). It carries out the reaction 12-octadecanoyloxy-octadecanoate + H2O = 12-hydroxyoctadecanoate + octadecanoate + H(+). The enzyme catalyses 13-octadecanoyloxy-octadecanoate + H2O = 13-hydroxy-octadecanoate + octadecanoate + H(+). The catalysed reaction is 5-(9Z-hexadecenoyloxy)-octadecanoate + H2O = 5-hydroxy-octadecanoate + (9Z)-hexadecenoate + H(+). It catalyses the reaction 9-octadecanoyloxy-octadecanoate + H2O = 9-hydroxy-octadecanoate + octadecanoate + H(+). With respect to regulation, activated by bile salts such as sodium taurocholate. In terms of biological role, catalyzes the hydrolysis of a wide range of substrates including cholesteryl esters, phospholipids, lysophospholipids, di- and tri-acylglycerols, and fatty acid esters of hydroxy fatty acids (FAHFAs). Preferentially hydrolyzes FAHFAs with the ester bond further away from the carboxylate. Unsaturated FAHFAs are hydrolyzed more quickly than saturated FAHFAs. Has an essential role in the complete digestion of dietary lipids and their intestinal absorption, along with the absorption of fat-soluble vitamins. This Mus musculus (Mouse) protein is Bile salt-activated lipase (Cel).